Reading from the N-terminus, the 266-residue chain is Nickel import ATP-binding protein NikE (266 aa).

In terms of domain architecture, ABC transporter spans 4–252; sequence ISADNIVKIY…RHPASRLLRE (249 aa). An ATP-binding site is contributed by 45–52; it reads GRSGCGKS.

This sequence belongs to the ABC transporter superfamily. Nickel importer (TC 3.A.1.5.3) family. The complex is composed of two ATP-binding proteins (NikD and NikE), two transmembrane proteins (NikB and NikC) and a solute-binding protein (NikA).

It localises to the cell inner membrane. It catalyses the reaction Ni(2+)(out) + ATP + H2O = Ni(2+)(in) + ADP + phosphate + H(+). Functionally, part of the ABC transporter complex NikABCDE involved in nickel import. Responsible for energy coupling to the transport system. The protein is Nickel import ATP-binding protein NikE of Brucella suis biovar 1 (strain 1330).